A 151-amino-acid polypeptide reads, in one-letter code: D-aminoacyl-tRNA deacylase (151 aa).

The short motif at glycine 136–proline 137 is the Gly-cisPro motif, important for rejection of L-amino acids element.

Belongs to the DTD family. Homodimer.

Its subcellular location is the cytoplasm. It catalyses the reaction glycyl-tRNA(Ala) + H2O = tRNA(Ala) + glycine + H(+). The catalysed reaction is a D-aminoacyl-tRNA + H2O = a tRNA + a D-alpha-amino acid + H(+). Its function is as follows. An aminoacyl-tRNA editing enzyme that deacylates mischarged D-aminoacyl-tRNAs. Also deacylates mischarged glycyl-tRNA(Ala), protecting cells against glycine mischarging by AlaRS. Acts via tRNA-based rather than protein-based catalysis; rejects L-amino acids rather than detecting D-amino acids in the active site. By recycling D-aminoacyl-tRNA to D-amino acids and free tRNA molecules, this enzyme counteracts the toxicity associated with the formation of D-aminoacyl-tRNA entities in vivo and helps enforce protein L-homochirality. The polypeptide is D-aminoacyl-tRNA deacylase (Lactococcus lactis subsp. cremoris (strain SK11)).